Here is a 222-residue protein sequence, read N- to C-terminus: N-(5'-phosphoribosyl)anthranilate isomerase (222 aa).

This sequence belongs to the TrpF family.

It carries out the reaction N-(5-phospho-beta-D-ribosyl)anthranilate = 1-(2-carboxyphenylamino)-1-deoxy-D-ribulose 5-phosphate. It functions in the pathway amino-acid biosynthesis; L-tryptophan biosynthesis; L-tryptophan from chorismate: step 3/5. The sequence is that of N-(5'-phosphoribosyl)anthranilate isomerase from Rhizobium etli (strain CIAT 652).